The sequence spans 190 residues: MRAFKVTRDTNETKIHLELNIDGTGKYAITTGIAFFDHVLSSFAKHGAFDLKLDVLGDLEIDDHHTVEDVGIVLGKAFENMEKKNIKRFGWAIIPMDEAKASVSVDIGGRPYVVGDYTPSTEKIGNFSTENVVHFFESFSNNAKINLHFEVTGENEHHKVEALFKAFGVAMDMATQIDERKGIVSTKGVI.

The protein belongs to the imidazoleglycerol-phosphate dehydratase family.

It localises to the cytoplasm. It carries out the reaction D-erythro-1-(imidazol-4-yl)glycerol 3-phosphate = 3-(imidazol-4-yl)-2-oxopropyl phosphate + H2O. It functions in the pathway amino-acid biosynthesis; L-histidine biosynthesis; L-histidine from 5-phospho-alpha-D-ribose 1-diphosphate: step 6/9. In Methanococcus maripaludis (strain C7 / ATCC BAA-1331), this protein is Imidazoleglycerol-phosphate dehydratase.